We begin with the raw amino-acid sequence, 370 residues long: Chloromuconate cycloisomerase (370 aa).

Catalysis depends on K165, which acts as the Proton acceptor. Positions 194, 220, and 245 each coordinate Mn(2+). E323 serves as the catalytic Proton donor.

It belongs to the mandelate racemase/muconate lactonizing enzyme family. Mn(2+) serves as cofactor.

The catalysed reaction is 2-[(2R)-2-chloro-2,5-dihydro-5-oxofuryl]acetate = 3-chloro-cis,cis-muconate + H(+). Its pathway is aromatic compound metabolism; 3-chlorocatechol degradation. In terms of biological role, highly active toward chlorinated substrates but retains diminished activity toward the non-chlorinated substrates. This is Chloromuconate cycloisomerase (clcB) from Pseudomonas putida (Arthrobacter siderocapsulatus).